The sequence spans 556 residues: MNVMQENQIKLIEHIKQAVVQAVGLEEAEVPEILLEVPKDKKHGDYSTNIAMQLARVAKKAPRQIAESIVPELKKDNKLIKEVEIAGPGFINFYLDNAYLTDLVPVILTEDKQYGESDFGKGEKFQIEFVSANPTGDLHLGHARGAAIGDSLANIMKMAGFDVSREYYINDAGNQINNLVLSAEARYFEALGLDSEFPEDGYRGADIISLGKDLAAKYGDKYVHTSEEERRSVFRVDALAFETGKLRADLEEFRVSFDEWFSETSLYEENKVLPALERLRENGYIYEQDGATWLRTTDFEDDKDRVLIKSDGSYTYFLPDIAYHLNKLERGFDVLIDIWGADHHGYIPRMRAAIEALGYSPNQLEVEIIQLVHLFEDGVQVKMSKRTGKSVTMRDLIEEVGLDATRYFFAMRSSDTHMNFDMSLAKSTSNDNPVYYVQYAHARISSILRSGKEQGLEVTKDADMSLLQTEAEYDLLKVLGEFADVVAEAATKRAPHRIVRYLNDLASSFHRFYNSNKVLDMDNLEVTKARLALIKTAQITLRNGLTLLGVSAPEKM.

A 'HIGH' region motif is present at residues 132-142; that stretch reads ANPTGDLHLGH.

It belongs to the class-I aminoacyl-tRNA synthetase family. As to quaternary structure, monomer.

The protein localises to the cytoplasm. The enzyme catalyses tRNA(Arg) + L-arginine + ATP = L-arginyl-tRNA(Arg) + AMP + diphosphate. This chain is Arginine--tRNA ligase, found in Listeria monocytogenes serotype 4b (strain F2365).